Here is a 309-residue protein sequence, read N- to C-terminus: Carbamate kinase (309 aa).

The protein belongs to the carbamate kinase family.

It localises to the cytoplasm. It carries out the reaction hydrogencarbonate + NH4(+) + ATP = carbamoyl phosphate + ADP + H2O + H(+). The protein operates within metabolic intermediate metabolism; carbamoyl phosphate degradation; CO(2) and NH(3) from carbamoyl phosphate: step 1/1. The polypeptide is Carbamate kinase (arcC) (Staphylococcus haemolyticus (strain JCSC1435)).